The chain runs to 383 residues: Lipid-A-disaccharide synthase (383 aa).

This sequence belongs to the LpxB family.

It carries out the reaction 2-N,3-O-bis[(3R)-3-hydroxytetradecanoyl]-alpha-D-glucosaminyl 1-phosphate + UDP-2-N,3-O-bis[(3R)-3-hydroxytetradecanoyl]-alpha-D-glucosamine = lipid A disaccharide (E. coli) + UDP + H(+). The enzyme catalyses a lipid X + a UDP-2-N,3-O-bis[(3R)-3-hydroxyacyl]-alpha-D-glucosamine = a lipid A disaccharide + UDP + H(+). The protein operates within glycolipid biosynthesis; lipid IV(A) biosynthesis; lipid IV(A) from (3R)-3-hydroxytetradecanoyl-[acyl-carrier-protein] and UDP-N-acetyl-alpha-D-glucosamine: step 5/6. Functionally, condensation of UDP-2,3-diacylglucosamine and 2,3-diacylglucosamine-1-phosphate to form lipid A disaccharide, a precursor of lipid A, a phosphorylated glycolipid that anchors the lipopolysaccharide to the outer membrane of the cell. The sequence is that of Lipid-A-disaccharide synthase from Pectobacterium atrosepticum (strain SCRI 1043 / ATCC BAA-672) (Erwinia carotovora subsp. atroseptica).